The sequence spans 470 residues: 3-isopropylmalate dehydratase large subunit (470 aa).

3 residues coordinate [4Fe-4S] cluster: cysteine 347, cysteine 407, and cysteine 410.

This sequence belongs to the aconitase/IPM isomerase family. LeuC type 1 subfamily. As to quaternary structure, heterodimer of LeuC and LeuD. It depends on [4Fe-4S] cluster as a cofactor.

The catalysed reaction is (2R,3S)-3-isopropylmalate = (2S)-2-isopropylmalate. The protein operates within amino-acid biosynthesis; L-leucine biosynthesis; L-leucine from 3-methyl-2-oxobutanoate: step 2/4. Functionally, catalyzes the isomerization between 2-isopropylmalate and 3-isopropylmalate, via the formation of 2-isopropylmaleate. This chain is 3-isopropylmalate dehydratase large subunit, found in Shewanella amazonensis (strain ATCC BAA-1098 / SB2B).